The sequence spans 100 residues: Urease subunit gamma (100 aa).

It belongs to the urease gamma subunit family. As to quaternary structure, heterotrimer of UreA (gamma), UreB (beta) and UreC (alpha) subunits. Three heterotrimers associate to form the active enzyme.

It is found in the cytoplasm. It carries out the reaction urea + 2 H2O + H(+) = hydrogencarbonate + 2 NH4(+). Its pathway is nitrogen metabolism; urea degradation; CO(2) and NH(3) from urea (urease route): step 1/1. In Methylibium petroleiphilum (strain ATCC BAA-1232 / LMG 22953 / PM1), this protein is Urease subunit gamma.